Consider the following 202-residue polypeptide: UPF0126 membrane protein YvgT (202 aa).

A run of 6 helical transmembrane segments spans residues 3 to 23 (WELL…IVAM), 26 to 46 (EYDI…GGAI), 63 to 83 (AYFQ…KLLL), 90 to 110 (GNLS…LYAV), 113 to 133 (GHPL…GGII), and 160 to 180 (IVGL…FVLV).

This sequence belongs to the UPF0126 family.

The protein localises to the cell membrane. The protein is UPF0126 membrane protein YvgT (yvgT) of Bacillus subtilis (strain 168).